We begin with the raw amino-acid sequence, 258 residues long: Type III pantothenate kinase (258 aa).

6 to 13 is an ATP binding site; it reads DVGNTNIV. Substrate is bound by residues Y100 and 107–110; that span reads GADR. The Proton acceptor role is filled by D109. K(+) is bound at residue D129. Residue T132 coordinates ATP. T184 provides a ligand contact to substrate.

The protein belongs to the type III pantothenate kinase family. In terms of assembly, homodimer. Requires NH4(+) as cofactor. K(+) is required as a cofactor.

It is found in the cytoplasm. It carries out the reaction (R)-pantothenate + ATP = (R)-4'-phosphopantothenate + ADP + H(+). The protein operates within cofactor biosynthesis; coenzyme A biosynthesis; CoA from (R)-pantothenate: step 1/5. Catalyzes the phosphorylation of pantothenate (Pan), the first step in CoA biosynthesis. This is Type III pantothenate kinase from Clostridium botulinum (strain Loch Maree / Type A3).